Consider the following 625-residue polypeptide: Somatic embryogenesis receptor kinase 1 (625 aa).

Residues 1-26 (MESSYVVFILLSLILLPNHSLWLASA) form the signal peptide. Topologically, residues 27 to 238 (NLEGDALHTL…STPSGYGITG (212 aa)) are extracellular. Cys58 and Cys65 are joined by a disulfide. 2 leucine-rich repeat receptor-like protein kinase binding regions span residues 59-78 (TWFH…DLGN) and 97-102 (YLELYS). Residue 61-62 (FH) participates in brassinolide binding. 4 LRR repeats span residues 92-116 (LKNL…LGNL), 118-140 (NLVS…LGKL), 141-164 (SKLR…LTNI), and 165-189 (TTLQ…SFSL). N-linked (GlcNAc...) asparagine glycosylation is found at Asn104 and Asn115. Leucine-rich repeat receptor-like protein kinase binding regions lie at residues 123–126 (DLYL) and 145–147 (FLR). N-linked (GlcNAc...) asparagine glycans are attached at residues Asn150, Asn163, and Asn184. Positions 171–194 (DLSNNRLSGSVPDNGSFSLFTPIS) are leucine-rich repeat receptor-like protein kinase binding. A disulfide bond links Cys202 and Cys210. Residues 239–259 (AIAGGVAAGAALLFAAPAIAF) traverse the membrane as a helical segment. At 260-625 (AWWRRRKPLD…LHAVELSGPR (366 aa)) the chain is on the cytoplasmic side. 3 positions are modified to phosphoserine: Ser291, Ser299, and Ser303. The Protein kinase domain maps to 302 to 589 (FSNKNILGRG…GLAEKWDEWQ (288 aa)). 308-316 (LGRGGFGKV) is a binding site for ATP. Thr325 bears the Phosphothreonine mark. ATP is bound at residue Lys330. A phosphothreonine mark is found at Thr337 and Thr346. A phosphoserine mark is found at Ser352, Ser383, Ser386, and Ser394. Thr402 carries the post-translational modification Phosphothreonine. The residue at position 415 (Ser415) is a Phosphoserine. The active-site Proton acceptor is the Asp429. Tyr456 carries the post-translational modification Phosphotyrosine. Phosphothreonine occurs at positions 459, 462, 463, and 468. Tyr476 is modified (phosphotyrosine). At Ser478 the chain carries Phosphoserine. The residue at position 479 (Thr479) is a Phosphothreonine. At Ser483 the chain carries Phosphoserine. Thr541 carries the post-translational modification Phosphothreonine. Tyr543 is modified (phosphotyrosine). Thr559 is subject to Phosphothreonine. Phosphoserine is present on residues Ser606 and Ser612. Position 613 is a phosphothreonine (Thr613). Tyr614 bears the Phosphotyrosine mark. The residue at position 622 (Ser622) is a Phosphoserine.

This sequence belongs to the protein kinase superfamily. Ser/Thr protein kinase family. In terms of assembly, monomer, homo- and heterodimer. Interacts with KAPP, CDC48A, GRF6 or GRF7, SERK2, BRI1 and SERK3/BAK1 to form the SERK1 signaling complex. Bind to BRI1 in a brassinolide-dependent manner. Heterodimer with PSKR1. Interacts with the EF-Tu receptor EFR and FLS2 in a specific ligand-induced manner. Interacts with ERECTA in a EPF2-induced manner. Interacts with ERL1 in a EPF1-induced manner. Interacts with TMM. In the presence of the signal peptide RGF1, interacts with RGI1/RGFR4/RCH2, RGI2/RGFR3/RCH1, RGI3/RGFR1, RGI4/RGFR2/SKM2 and RGI5/RGFR5. Requires Mg(2+) as cofactor. Post-translationally, glycosylated. Important for targeting to the plasma membrane. In terms of processing, intermolecular autophosphorylation. The catalytic activity of SERK1 depends on the presence of a phosphorylated Thr residue in SERK1. The phosphorylation is induced by brassinosteroids. Transphosphorylation by BRI1 occurs only on Ser-299 and Thr-462. Dephosphorylation of threonine residues by the kinase-associated protein phosphatase (KAPP) is involved in SERK1 endocytosis. Expressed in flowers, tapetum, developing microspores, all cells of the embryo sac, provascular strands and developing vascular bundles. Low expression in adult vascular tissue. Detected in root meristem.

It localises to the cell membrane. The protein localises to the endoplasmic reticulum membrane. It catalyses the reaction L-seryl-[protein] + ATP = O-phospho-L-seryl-[protein] + ADP + H(+). It carries out the reaction L-threonyl-[protein] + ATP = O-phospho-L-threonyl-[protein] + ADP + H(+). The catalysed reaction is L-tyrosyl-[protein] + ATP = O-phospho-L-tyrosyl-[protein] + ADP + H(+). Its activity is regulated as follows. Inhibited by manganese. Its function is as follows. Dual specificity kinase acting on both serine/threonine- and tyrosine-containing substrates. Phosphorylates BRI1 on 'Ser-887' and CDC48 on at least one threonine residue and on 'Ser-41'. Confers embryogenic competence. Acts redundantly with SERK2 as a control point for sporophytic development controlling male gametophyte production. Involved in the brassinolide signaling pathway. Probably required during small peptide (e.g. RGF1) signaling. Involved in the perception of phytosulfokine and subsequent signal transduction. Acts as a RLK5 coreceptor and promotes high-affinity IDA sensing, thus being a positive regulator of floral abscission. The polypeptide is Somatic embryogenesis receptor kinase 1 (Arabidopsis thaliana (Mouse-ear cress)).